The chain runs to 93 residues: Pyrimidine/purine nucleoside phosphorylase (93 aa).

It belongs to the nucleoside phosphorylase PpnP family.

The catalysed reaction is a purine D-ribonucleoside + phosphate = a purine nucleobase + alpha-D-ribose 1-phosphate. It catalyses the reaction adenosine + phosphate = alpha-D-ribose 1-phosphate + adenine. It carries out the reaction cytidine + phosphate = cytosine + alpha-D-ribose 1-phosphate. The enzyme catalyses guanosine + phosphate = alpha-D-ribose 1-phosphate + guanine. The catalysed reaction is inosine + phosphate = alpha-D-ribose 1-phosphate + hypoxanthine. It catalyses the reaction thymidine + phosphate = 2-deoxy-alpha-D-ribose 1-phosphate + thymine. It carries out the reaction uridine + phosphate = alpha-D-ribose 1-phosphate + uracil. The enzyme catalyses xanthosine + phosphate = alpha-D-ribose 1-phosphate + xanthine. Catalyzes the phosphorolysis of diverse nucleosides, yielding D-ribose 1-phosphate and the respective free bases. Can use uridine, adenosine, guanosine, cytidine, thymidine, inosine and xanthosine as substrates. Also catalyzes the reverse reactions. The polypeptide is Pyrimidine/purine nucleoside phosphorylase (Pseudoalteromonas atlantica (strain T6c / ATCC BAA-1087)).